Reading from the N-terminus, the 992-residue chain is Meckelin (992 aa).

The signal sequence occupies residues 1–36; that stretch reads MVTRTRPVAAMAVRSRSSSRTGTAYLLLVLCEVSWA. Residues 37-280 are cysteine-rich; sequence QIFSFPFRRP…FHYIFESTAG (244 aa). Topologically, residues 37 to 516 are extracellular; that stretch reads QIFSFPFRRP…SVKYEMNQGD (480 aa). 12 disulfide bridges follow: Cys-49–Cys-62, Cys-65–Cys-78, Cys-80–Cys-97, Cys-100–Cys-114, Cys-117–Cys-127, Cys-129–Cys-150, Cys-153–Cys-170, Cys-173–Cys-184, Cys-186–Cys-197, Cys-237–Cys-246, Cys-253–Cys-268, and Cys-354–Cys-375. Residue Asn-242 is glycosylated (N-linked (GlcNAc...) asparagine). Residues 517–545 form a helical membrane-spanning segment; sequence ASVHTDIALGVLGGLAVLSSLLKTAGWKR. The Cytoplasmic portion of the chain corresponds to 546-555; sequence RVGSPMIDLQ. A helical membrane pass occupies residues 556-587; that stretch reads TVMKFLLYYAGDLANVFFIITVGTGLYWLIFF. Residues 588 to 600 lie on the Extracellular side of the membrane; sequence KAQKSVSVLLPMP. A helical membrane pass occupies residues 601-628; that stretch reads VQEERFVTYVGCAFAMKALQFLHKFISQ. The Cytoplasmic portion of the chain corresponds to 629-667; sequence ISIDIFFIDWERPKGKVLKAVEGEGGVRSATVPVSIWRT. An intramembrane region (helical) is located at residues 668-676; that stretch reads YFVANEWNE. A discontinuously helical transmembrane segment spans residues 668–698; that stretch reads YFVANEWNEIQTVRKINPLFQVLTTLFFLEV. Residues 677 to 685 lie within the membrane without spanning it; that stretch reads IQTVRKINP. The segment at residues 686–698 is an intramembrane region (helical); the sequence is LFQVLTTLFFLEV. Over 699 to 728 the chain is Extracellular; it reads VGFKNLALMDSSSSLSRNPSDYTAPYSRIL. An intramembrane region (helical) is located at residues 729-754; it reads RYAVATAIWLVIGIIQVVFFAAFYER. A discontinuously helical membrane pass occupies residues 729–768; it reads RYAVATAIWLVIGIIQVVFFAAFYERFIEDKIRQFVDLCS. The stretch at 755–759 is an intramembrane region; sequence FIEDK. Positions 760–768 form an intramembrane region, helical; the sequence is IRQFVDLCS. Topologically, residues 769-923 are cytoplasmic; that stretch reads MSNVSVFLLS…SIFYNDEGHS (155 aa). Positions 924–926 form an intramembrane region, helical; that stretch reads FSS. Residues 924 to 949 form a discontinuously helical membrane-spanning segment; sequence FSSVLYYGNEATLLIFDLLFFCVVDL. The stretch at 927-933 is an intramembrane region; the sequence is VLYYGNE. An intramembrane region (helical) is located at residues 934-949; it reads ATLLIFDLLFFCVVDL. Topologically, residues 950-954 are extracellular; that stretch reads ACQDF. A helical membrane pass occupies residues 955–982; the sequence is VLASFLTYLQQEIFRFIRNTVGQKNLAT. The Cytoplasmic portion of the chain corresponds to 983-992; the sequence is KTLVDERFLI.

Homodimer. Part of the tectonic-like complex (also named B9 complex). Interacts with DNAJB9, DNAJC10 and mutated SFTPC. Interacts with SYNE2 during the early establishment of cell polarity. Interacts (via C-terminus) with FLNA. Interacts with TMEM218. Interacts with WNT5A. Interacts with ROR2.

The protein resides in the cell membrane. The protein localises to the endoplasmic reticulum membrane. Its subcellular location is the cytoplasm. It localises to the cytoskeleton. It is found in the cilium basal body. Part of the tectonic-like complex which is required for tissue-specific ciliogenesis and may regulate ciliary membrane composition. Involved in centrosome migration to the apical cell surface during early ciliogenesis. Required for ciliary structure and function, including a role in regulating length and appropriate number through modulating centrosome duplication. Is a key regulator of stereociliary bundle orientation. Required for epithelial cell branching morphology. Essential for endoplasmic reticulum-associated degradation (ERAD) of surfactant protein C (sftpc). Involved in the negative regulation of canonical Wnt signaling, and activation of the non-canonical cascade stimulated by WNT5A. In non-canonical Wnt signaling, it may act as ROR2 coreceptor. The sequence is that of Meckelin (Tmem67) from Mus musculus (Mouse).